Here is a 465-residue protein sequence, read N- to C-terminus: Plasma alpha-L-fucosidase (465 aa).

An N-terminal signal peptide occupies residues 1 to 26 (MRPQELPRLAFPLLLLLLLPPPPCPA). Residues N169 and N237 are each glycosylated (N-linked (GlcNAc...) asparagine). A Phosphoserine modification is found at S299. Residue N375 is glycosylated (N-linked (GlcNAc...) asparagine).

It belongs to the glycosyl hydrolase 29 family. Homotetramer.

The protein localises to the secreted. It carries out the reaction an alpha-L-fucoside + H2O = L-fucose + an alcohol. Functionally, alpha-L-fucosidase is responsible for hydrolyzing the alpha-1,6-linked fucose joined to the reducing-end N-acetylglucosamine of the carbohydrate moieties of glycoproteins. In Pongo abelii (Sumatran orangutan), this protein is Plasma alpha-L-fucosidase (FUCA2).